The following is a 276-amino-acid chain: Large ribosomal subunit protein uL2 (276 aa).

Positions 225–276 (MNPNDHPHGGGEGRNPIGRNPVTPWGKPALGAKTRKKKNPSNRFIVKRRGKK) are disordered. Over residues 257–276 (KTRKKKNPSNRFIVKRRGKK) the composition is skewed to basic residues.

Belongs to the universal ribosomal protein uL2 family. As to quaternary structure, part of the 50S ribosomal subunit. Forms a bridge to the 30S subunit in the 70S ribosome.

Its function is as follows. One of the primary rRNA binding proteins. Required for association of the 30S and 50S subunits to form the 70S ribosome, for tRNA binding and peptide bond formation. It has been suggested to have peptidyltransferase activity; this is somewhat controversial. Makes several contacts with the 16S rRNA in the 70S ribosome. The polypeptide is Large ribosomal subunit protein uL2 (Desulfitobacterium hafniense (strain DSM 10664 / DCB-2)).